We begin with the raw amino-acid sequence, 76 residues long: Conotoxin PnMKLT1-1111 (76 aa).

The signal sequence occupies residues 1–22 (MKLTCMMIVAVLFLTAWTVVTA). Positions 23-50 (VPHSNKRLANLYLKARHEMKNPEASNVD) are excised as a propeptide. 3 cysteine pairs are disulfide-bonded: cysteine 53-cysteine 67, cysteine 60-cysteine 71, and cysteine 66-cysteine 75.

The protein belongs to the conotoxin O1 superfamily. Expressed by the venom duct.

Its subcellular location is the secreted. This Conus pennaceus (Feathered cone) protein is Conotoxin PnMKLT1-1111.